Reading from the N-terminus, the 181-residue chain is Bifunctional protein PyrR (181 aa).

Substrate-binding positions include 41 to 42 (TR), 105 to 113 (DDVLYTGRT), R138, and V162. The PRPP-binding signature appears at 101 to 113 (VILVDDVLYTGRT).

It belongs to the purine/pyrimidine phosphoribosyltransferase family. PyrR subfamily. Homodimer and homohexamer; in equilibrium.

The catalysed reaction is UMP + diphosphate = 5-phospho-alpha-D-ribose 1-diphosphate + uracil. Its function is as follows. Regulates transcriptional attenuation of the pyrimidine nucleotide (pyr) operon by binding in a uridine-dependent manner to specific sites on pyr mRNA. This disrupts an antiterminator hairpin in the RNA and favors formation of a downstream transcription terminator, leading to a reduced expression of downstream genes. Functionally, also displays a weak uracil phosphoribosyltransferase activity which is not physiologically significant. The sequence is that of Bifunctional protein PyrR (pyrR) from Bacillus subtilis (strain 168).